Here is a 177-residue protein sequence, read N- to C-terminus: Hypoxanthine phosphoribosyltransferase (177 aa).

Diphosphate is bound by residues R43 and G44. Residue E99 participates in GMP binding. E99 contacts IMP. 2 residues coordinate Mg(2+): E99 and D100. The active-site Proton acceptor is D103. GMP contacts are provided by residues 103 to 108 (DSGKTL), K131, and D159. IMP contacts are provided by residues 103–108 (DSGKTL) and K131. R165 lines the diphosphate pocket.

This sequence belongs to the purine/pyrimidine phosphoribosyltransferase family. As to quaternary structure, homotetramer. Requires Mg(2+) as cofactor.

The protein resides in the cytoplasm. The catalysed reaction is IMP + diphosphate = hypoxanthine + 5-phospho-alpha-D-ribose 1-diphosphate. It carries out the reaction GMP + diphosphate = guanine + 5-phospho-alpha-D-ribose 1-diphosphate. It participates in purine metabolism; IMP biosynthesis via salvage pathway; IMP from hypoxanthine: step 1/1. Purine salvage pathway enzyme which catalyzes the transfer of the ribosyl-5-phosphate group from 5-phospho-alpha-D-ribose 1-diphosphate (PRPP) to the N9 position of hypoxanthine to yield IMP (inosine 5'-monophosphate). To a lesser extent, can also act on guanine leading to GMP, but shows a highly less efficient activity with xanthine. In Buchnera aphidicola subsp. Schizaphis graminum (strain Sg), this protein is Hypoxanthine phosphoribosyltransferase (hpt).